The following is a 383-amino-acid chain: Galactokinase (383 aa).

A substrate-binding site is contributed by 34-37; it reads EHTD. ATP is bound at residue 124-130; it reads GAGLSSS. Mg(2+) is bound by residues serine 130 and glutamate 162. Residue aspartate 174 is the Proton acceptor of the active site. Tyrosine 223 provides a ligand contact to substrate.

This sequence belongs to the GHMP kinase family. GalK subfamily.

The protein localises to the cytoplasm. The enzyme catalyses alpha-D-galactose + ATP = alpha-D-galactose 1-phosphate + ADP + H(+). It participates in carbohydrate metabolism; galactose metabolism. Its function is as follows. Catalyzes the transfer of the gamma-phosphate of ATP to D-galactose to form alpha-D-galactose-1-phosphate (Gal-1-P). The protein is Galactokinase of Yersinia pseudotuberculosis serotype IB (strain PB1/+).